A 515-amino-acid chain; its full sequence is Fatty acyl-CoA reductase 1 (515 aa).

The Cytoplasmic portion of the chain corresponds to 1 to 465 (MVSIPEYYEG…ARKHLNKLRN (465 aa)). Positions 451–507 (SGLPAARKHLNKLRNIRYGFNTILVILIWRIFIARSQMARNIWYFVVSLCYKFLSYF) are necessary and sufficient for PEX19-mediated localization into peroxisome membrane. A helical membrane pass occupies residues 466–483 (IRYGFNTILVILIWRIFI). Over 484 to 515 (ARSQMARNIWYFVVSLCYKFLSYFRASSTMRY) the chain is Peroxisomal.

The protein belongs to the fatty acyl-CoA reductase family. In terms of assembly, interacts with PEX19; PEX19 mediates the targeting of FAR1 to peroxisomes. In terms of tissue distribution, widely expressed. Expressed in all tissues examined. Highest expression seen in preputial gland. Expressed in the brain where large quantities of ether lipids are synthesized.

It localises to the peroxisome membrane. It catalyses the reaction a long-chain fatty acyl-CoA + 2 NADPH + 2 H(+) = a long-chain primary fatty alcohol + 2 NADP(+) + CoA. It carries out the reaction hexadecanoyl-CoA + 2 NADPH + 2 H(+) = hexadecan-1-ol + 2 NADP(+) + CoA. The enzyme catalyses octadecanoyl-CoA + 2 NADPH + 2 H(+) = octadecan-1-ol + 2 NADP(+) + CoA. The catalysed reaction is (9Z)-octadecenoyl-CoA + 2 NADPH + 2 H(+) = (9Z)-octadecen-1-ol + 2 NADP(+) + CoA. It catalyses the reaction (9Z,12Z)-octadecadienoyl-CoA + 2 NADPH + 2 H(+) = (9Z,12Z)-octadecadien-1-ol + 2 NADP(+) + CoA. It carries out the reaction eicosanoyl-CoA + 2 NADPH + 2 H(+) = eicosan-1-ol + 2 NADP(+) + CoA. The enzyme catalyses 16-methylheptadecanoyl-CoA + 2 NADPH + 2 H(+) = 16-methylheptadecan-1-ol + 2 NADP(+) + CoA. The catalysed reaction is 18-methylnonadecanoyl-CoA + 2 NADPH + 2 H(+) = 18-methylnonadecan-1-ol + 2 NADP(+) + CoA. Its function is as follows. Catalyzes the reduction of saturated and unsaturated C16 or C18 fatty acyl-CoA to fatty alcohols. It plays an essential role in the production of ether lipids/plasmalogens which synthesis requires fatty alcohols. In parallel, it is also required for wax monoesters production since fatty alcohols also constitute a substrate for their synthesis. The protein is Fatty acyl-CoA reductase 1 of Mus musculus (Mouse).